The following is a 143-amino-acid chain: Hemoglobin subunit alpha (143 aa).

Serine 2 is modified (N-acetylserine). The region spanning 2 to 143 (SLSDKDKSAV…VALALAEKYR (142 aa)) is the Globin domain. Position 60 (histidine 60) interacts with O2. Heme b is bound at residue histidine 89.

This sequence belongs to the globin family. In terms of assembly, heterotetramer of two alpha chains and two beta chains. In terms of tissue distribution, red blood cells.

Functionally, involved in oxygen transport from gills to the various peripheral tissues. The polypeptide is Hemoglobin subunit alpha (hba) (Pogonophryne scotti (Saddleback plunderfish)).